A 320-amino-acid chain; its full sequence is Apolipoprotein E (320 aa).

A signal peptide spans 1–18; it reads MKVLWAAFLVAFLAGCQG. A run of 8 repeats spans residues 82 to 103, 104 to 125, 126 to 147, 148 to 169, 170 to 191, 192 to 213, 214 to 236, and 237 to 258. Residues 82–199 form an 8 X 22 AA approximate tandem repeats region; it reads ALMDETMKEL…AERGVSAIRE (118 aa). Met145 carries the methionine sulfoxide modification. Ser149 is modified (phosphoserine). The segment at 160–170 is LDL and other lipoprotein receptors binding; the sequence is HLRKLRKRLLR. Heparin is bound at residue 164–167; it reads LRKR. Residues 212–293 are lipid-binding and lipoprotein association; sequence AATVGSSLAS…SWFEPLVEDM (82 aa). Heparin is bound at residue 232–239; sequence GERLRARM. The tract at residues 269-320 is homooligomerization; it reads QQMRLQAEAFQARLKSWFEPLVEDMQRQWAGLVEKVQAAVGASATPVPSDNH. Positions 281-293 are specificity for association with VLDL; it reads RLKSWFEPLVEDM.

This sequence belongs to the apolipoprotein A1/A4/E family. In terms of assembly, homotetramer. May interact with ABCA1; functionally associated with ABCA1 in the biogenesis of HDLs. May interact with APP/A4 amyloid-beta peptide; the interaction is extremely stable in vitro but its physiological significance is unclear. May interact with MAPT. May interact with MAP2. In the cerebrospinal fluid, interacts with secreted SORL1. Interacts with PMEL; this allows the loading of PMEL luminal fragment on ILVs to induce fibril nucleation. In terms of processing, APOE exists as multiple glycosylated and sialylated glycoforms within cells and in plasma. The extent of glycosylation and sialylation are tissue and context specific. Glycated in plasma VLDL. Post-translationally, phosphorylated by FAM20C in the extracellular medium.

The protein resides in the secreted. It localises to the extracellular space. Its subcellular location is the extracellular matrix. The protein localises to the extracellular vesicle. It is found in the endosome. The protein resides in the multivesicular body. Its function is as follows. APOE is an apolipoprotein, a protein associating with lipid particles, that mainly functions in lipoprotein-mediated lipid transport between organs via the plasma and interstitial fluids. APOE is a core component of plasma lipoproteins and is involved in their production, conversion and clearance. Apolipoproteins are amphipathic molecules that interact both with lipids of the lipoprotein particle core and the aqueous environment of the plasma. As such, APOE associates with chylomicrons, chylomicron remnants, very low density lipoproteins (VLDL) and intermediate density lipoproteins (IDL) but shows a preferential binding to high-density lipoproteins (HDL). It also binds a wide range of cellular receptors including the LDL receptor/LDLR, the LDL receptor-related proteins LRP1, LRP2 and LRP8 and the very low-density lipoprotein receptor/VLDLR that mediate the cellular uptake of the APOE-containing lipoprotein particles. Finally, APOE also has a heparin-binding activity and binds heparan-sulfate proteoglycans on the surface of cells, a property that supports the capture and the receptor-mediated uptake of APOE-containing lipoproteins by cells. A main function of APOE is to mediate lipoprotein clearance through the uptake of chylomicrons, VLDLs, and HDLs by hepatocytes. APOE is also involved in the biosynthesis by the liver of VLDLs as well as their uptake by peripheral tissues ensuring the delivery of triglycerides and energy storage in muscle, heart and adipose tissues. By participating in the lipoprotein-mediated distribution of lipids among tissues, APOE plays a critical role in plasma and tissues lipid homeostasis. APOE is also involved in two steps of reverse cholesterol transport, the HDLs-mediated transport of cholesterol from peripheral tissues to the liver, and thereby plays an important role in cholesterol homeostasis. First, it is functionally associated with ABCA1 in the biogenesis of HDLs in tissues. Second, it is enriched in circulating HDLs and mediates their uptake by hepatocytes. APOE also plays an important role in lipid transport in the central nervous system, regulating neuron survival and sprouting. This Saimiri boliviensis boliviensis (Bolivian squirrel monkey) protein is Apolipoprotein E (APOE).